A 565-amino-acid polypeptide reads, in one-letter code: Efflux pump aunC (565 aa).

Over residues 1–14 (MSDTARISGGSFTS) the composition is skewed to polar residues. Positions 1 to 57 (MSDTARISGGSFTSPPGRDVELNSFKEASQTRLYPYSSRKEEEGREDEQQRPEREED) are disordered. The segment covering 38–54 (SRKEEEGREDEQQRPER) has biased composition (basic and acidic residues). A run of 14 helical transmembrane segments spans residues 59–79 (GALT…CIFC), 103–123 (DVGW…LPFG), 128–148 (FFPI…GSFI), 164–184 (VAGL…TQCV), 194–214 (GFIM…GGAF), 222–242 (WCFY…FFTF), 257–277 (AAGL…CLLL), 293–313 (IIAL…LQLW), 335–355 (LYGF…PIWF), 378–398 (VIFA…GPFM), 399–419 (LLSA…HPSS), 425–445 (IGYQ…PVFV), 457–477 (TATA…VSVA), and 530–550 (VHTF…ATVI).

The protein belongs to the major facilitator superfamily. TCR/Tet family.

It localises to the cell membrane. Functionally, efflux pump; part of the gene cluster that mediates the biosynthesis of aurasperone B, a dimeric gamma-naphthopyrone. The sequence is that of Efflux pump aunC from Aspergillus niger (strain ATCC MYA-4892 / CBS 513.88 / FGSC A1513).